A 153-amino-acid polypeptide reads, in one-letter code: Bkd operon transcriptional regulator (153 aa).

Positions 4–65 (LDRIDLKILR…RLDEERLSGA (62 aa)) constitute an HTH asnC-type domain. A DNA-binding region (H-T-H motif) is located at residues 23–42 (WRDLAQKVGLSLTPTLRRVR).

Its function is as follows. Positive regulator of the bkd operon for branched-chain keto acid dehydrogenase complex. The chain is Bkd operon transcriptional regulator (bkdR) from Pseudomonas aeruginosa (strain ATCC 15692 / DSM 22644 / CIP 104116 / JCM 14847 / LMG 12228 / 1C / PRS 101 / PAO1).